We begin with the raw amino-acid sequence, 420 residues long: Cytochrome c biogenesis protein Ccs1 (420 aa).

Transmembrane regions (helical) follow at residues Leu-12–Ile-32, Thr-71–Leu-91, and Ile-157–Ser-177.

The protein belongs to the Ccs1/CcsB family. May interact with CcsA.

It localises to the plastid. Its subcellular location is the chloroplast thylakoid membrane. Functionally, required during biogenesis of c-type cytochromes (cytochrome c6 and cytochrome f) at the step of heme attachment. The protein is Cytochrome c biogenesis protein Ccs1 of Phaeodactylum tricornutum (strain CCAP 1055/1).